Consider the following 1137-residue polypeptide: Bone sialoprotein-binding protein (1137 aa).

An N-terminal signal peptide occupies residues 1 to 52 (MINRDNKKAITKKGMISNRLNKFSIRKYTVGTASILVGTTLIFGLGNQEAKA). Positions 53-601 (AENTSTENAK…GDGTVKPEEK (549 aa)) are ligand binding A region. 2 disordered regions span residues 54–249 (ENTS…TAPT) and 675–697 (LPTK…VTVK). Over residues 61 to 75 (AKQDEASASDNKEVV) the composition is skewed to basic and acidic residues. The span at 77–89 (ETENNSTQKNDLT) shows a compositional bias: polar residues. Residues 92 to 106 (IKKETNTDSHQEAKE) show a composition bias toward basic and acidic residues. Residues 109–126 (TTSSTQQQQNNATTSTET) are compositionally biased toward low complexity. The segment covering 130 to 145 (NIEKENVKPSTDKTAT) has biased composition (basic and acidic residues). Polar residues predominate over residues 158–207 (PNNTNNDVTTKPSTSEIQTTPTTPQESTNIENSQPQPTPSKVDNQVTDAT). Residues 216–241 (SKEELKNNPEKLKELVRNDSNTDRST) are compositionally biased toward basic and acidic residues. CNA-B domains lie at 602–714 (LYKI…YKEP), 715–824 (KYNL…YKTP), and 825–935 (KYSL…EEDT). Positions 896 to 1112 (TQTGTNTTED…TGSENNGSNN (217 aa)) are disordered. Composition is skewed to acidic residues over residues 903 to 913 (TEDDKDADGGE) and 930 to 1076 (YFEE…DSDS). The short motif at 1100–1104 (LPETG) is the LPXTG sorting signal element. Thr-1103 is subject to Pentaglycyl murein peptidoglycan amidated threonine. Residues 1104–1137 (GSENNGSNNATLFGGLFAALGSLLLFGRRKKQNK) constitute a propeptide, removed by sortase.

It belongs to the serine-aspartate repeat-containing protein (SDr) family.

It is found in the secreted. The protein localises to the cell wall. In terms of biological role, specifically interacts with bone sialoprotein (BSP), a glycoprotein of bone and dentin extracellular matrix. Could contribute to staphylococcal osteomyelitis and arthritis. This Staphylococcus aureus (strain MRSA252) protein is Bone sialoprotein-binding protein (bbp).